The following is a 128-amino-acid chain: Kinase-associated lipoprotein B (128 aa).

An N-terminal signal peptide occupies residues 1 to 25; it reads MSTFETGSIVKGFYKTGVYIGEITA. The N-palmitoyl cysteine moiety is linked to residue Cys-26. Cys-26 carries S-diacylglycerol cysteine lipidation.

The protein localises to the cell membrane. Functionally, may play a role in the activation or the expression of KinB. The sequence is that of Kinase-associated lipoprotein B (kapB) from Bacillus subtilis (strain 168).